Reading from the N-terminus, the 178-residue chain is Endothelin-2 (178 aa).

The first 24 residues, 1 to 24 (MPAPGVHHPNTASPFLKTVAAGKG), serve as a signal peptide directing secretion. A propeptide spanning residues 25 to 46 (QVAAAPEHPAPSARARGSHLRP) is cleaved from the precursor. 2 disulfides stabilise this stretch: Cys-49–Cys-63 and Cys-51–Cys-59. Residues 70–178 (VNTPGQTAPY…RPTHPRRRKR (109 aa)) constitute a propeptide that is removed on maturation. The tract at residues 96–111 (CECSSGGDPACATFCH) is endothelin-like. The interval 156 to 178 (RFPRRPQEAGRQLRPTHPRRRKR) is disordered. Residues 169 to 178 (RPTHPRRRKR) show a composition bias toward basic residues.

The protein belongs to the endothelin/sarafotoxin family.

It localises to the secreted. Functionally, endothelins are endothelium-derived vasoconstrictor peptides. In Canis lupus familiaris (Dog), this protein is Endothelin-2 (EDN2).